The following is a 309-amino-acid chain: D-alanine--D-alanine ligase (309 aa).

The ATP-grasp domain occupies 110 to 305 (KLCWTGAGLP…FQELVWHILE (196 aa)). Residue 136 to 191 (RQALGFPVIVKPAEEGSSIGMSRAATAEELAQAWERASGYGCAVFAERWIDGVEYT) coordinates ATP. Mg(2+)-binding residues include aspartate 259, glutamate 272, and asparagine 274.

It belongs to the D-alanine--D-alanine ligase family. Mg(2+) serves as cofactor. The cofactor is Mn(2+).

Its subcellular location is the cytoplasm. The enzyme catalyses 2 D-alanine + ATP = D-alanyl-D-alanine + ADP + phosphate + H(+). It participates in cell wall biogenesis; peptidoglycan biosynthesis. Its function is as follows. Cell wall formation. The polypeptide is D-alanine--D-alanine ligase (Methylococcus capsulatus (strain ATCC 33009 / NCIMB 11132 / Bath)).